We begin with the raw amino-acid sequence, 1755 residues long: Periplakin (1755 aa).

The span at 1–11 (MHSLFRKRNKG) shows a compositional bias: basic residues. A disordered region spans residues 1-20 (MHSLFRKRNKGKYSPTVQTR). S14 is subject to Phosphoserine. 2 coiled-coil regions span residues 16-125 (TVQT…KQMY) and 182-387 (LAKD…QQVV). Spectrin repeat units follow at residues 214–315 (QDYM…SHLK), 321–483 (HQFH…HALQ), and 503–610 (RQLL…EKVD). An SH3 domain is found at 397 to 453 (LKPIPVEALCDFESDQGLISRGYSYTLQKNNGESWELTDSTGKKLAAPAVCFIIPPT). Residue S463 is modified to Phosphoserine. Coiled coils occupy residues 611–819 (VANR…RNSH) and 883–1644 (LSSG…SVAV). S885, S947, S1583, and S1656 each carry phosphoserine. Residues 1556 to 1755 (ELDFLREENH…ELAVLVSGQK (200 aa)) form an interacts with BFSP2 and VIM region. 2 Plectin repeats span residues 1650-1684 (ENHL…WKMF) and 1699-1734 (VKGP…AAQY).

Belongs to the plakin or cytolinker family. As to quaternary structure, homodimer or a heterodimer with EVPL. Found in a complex composed of PPL (via C-terminal linker domain), BFSP1 and BFSP2 in the retinal lens. Within the complex interacts (via C-terminal linker domain) with BFSP2. Interacts with VIM. Binds to the PH domain of AKT1. Interacts with FCGR1A. May interact with PPHLN1. In terms of tissue distribution, expressed in the retinal lens (at protein level).

The protein resides in the cell junction. The protein localises to the desmosome. It is found in the cytoplasm. It localises to the cytoskeleton. Its subcellular location is the cell membrane. In terms of biological role, component of the cornified envelope of keratinocytes. May link the cornified envelope to desmosomes and intermediate filaments. May act as a localization signal in PKB/AKT-mediated signaling. The chain is Periplakin (Ppl) from Mus musculus (Mouse).